The following is a 172-amino-acid chain: uncharacterized protein (172 aa).

2 disordered regions span residues 1-39 (MAKV…NSNN) and 90-112 (DLNG…GSIN). Residues 98-110 (NDSNNDNSPSRGS) show a composition bias toward low complexity.

This is an uncharacterized protein from Dictyostelium discoideum (Social amoeba).